We begin with the raw amino-acid sequence, 305 residues long: Insulin-like growth factor-binding protein 2 (305 aa).

An N-terminal signal peptide occupies residues 1–34; sequence MLPRLGGPALPLLLPSLLLLLLLGAGGCGPGVRA. Positions 36 to 118 constitute an IGFBP N-terminal domain; the sequence is VLFRCPPCTP…VTGAGTCEKR (83 aa). Cystine bridges form between Cys-40-Cys-68, Cys-43-Cys-70, Cys-51-Cys-71, Cys-59-Cys-74, Cys-82-Cys-95, Cys-89-Cys-115, Cys-207-Cys-241, Cys-252-Cys-263, and Cys-265-Cys-286. Positions 204–286 constitute a Thyroglobulin type-1 domain; that stretch reads RTPCQQELDQ…APTIRGDPEC (83 aa). Positions 281-283 match the Cell attachment site motif; sequence RGD.

Interacts with IGF1. Interacts with IGF2. Interacts (via RGD motif) with integrin alpha5/ITGA5; this interaction induces cell migration, adhesion or apoptosis according to the context. Interacts with PTPRB; this interaction leads to PTPRB dimerization and inactivation. In terms of processing, cleaved by MMP9 leading to release of free IGF2 from IGFBP2-IGF2 complex, which contributes to enhance the motility and the growth of astrocytes. Post-translationally, O-glycosylated. Highly expressed in adult liver, but also in kidney, lung, brain, spleen, testis and ovary.

Its subcellular location is the secreted. Its function is as follows. Multifunctional protein that plays a critical role in regulating the availability of IGFs such as IGF1 and IGF2 to their receptors and thereby regulates IGF-mediated cellular processes including proliferation, differentiation, and apoptosis in a cell-type specific manner. Functions coordinately with receptor protein tyrosine phosphatase beta/PTPRB and the IGF1 receptor to regulate IGF1-mediated signaling by stimulating the phosphorylation of PTEN leading to its inactivation and AKT1 activation. Plays a positive role in cell migration via interaction with integrin alpha5/ITGA5 through an RGD motif. Additionally, interaction with ITGA5/ITGB1 enhances the adhesion of endothelial progenitor cells to endothelial cells. Upon mitochondrial damage, facilitates apoptosis with ITGA5 of podocytes, and then activates the phosphorylation of focal adhesion kinase (FAK)-mediated mitochondrial injury. This chain is Insulin-like growth factor-binding protein 2 (Igfbp2), found in Mus musculus (Mouse).